Reading from the N-terminus, the 467-residue chain is 6-phospho-beta-galactosidase (467 aa).

Residues Gln19, His116, Asn159, Glu160, and Asn297 each contribute to the D-galactose 6-phosphate site. The active-site Proton donor is the Glu160. The active-site Nucleophile is the Glu375. The D-galactose 6-phosphate site is built by Ser428, Trp429, Lys435, and Tyr437.

The protein belongs to the glycosyl hydrolase 1 family.

It carries out the reaction a 6-phospho-beta-D-galactoside + H2O = D-galactose 6-phosphate + an alcohol. It participates in carbohydrate metabolism; lactose degradation; D-galactose 6-phosphate and beta-D-glucose from lactose 6-phosphate: step 1/1. With respect to regulation, inhibited by both galactose-6-phosphate and ATP. This is 6-phospho-beta-galactosidase from Leptotrichia buccalis (strain ATCC 14201 / DSM 1135 / JCM 12969 / NCTC 10249 / C-1013-b).